The primary structure comprises 290 residues: 4-hydroxybenzoate octaprenyltransferase (290 aa).

8 helical membrane passes run 23-43 (IGALLLLWPTLWALWVATPGV), 46-66 (LWILAVFVAGVWLMRAAGCVV), 99-119 (LFVVLVLISFLLVLTLNTMTI), 141-161 (LPQVVLGAAFGWSIPMAFAAV), 163-183 (ESVPLSCWLMFLANILWAVAY), 213-233 (LIIGIFQIGVLALMAIIGELN), 234-254 (GLGWGYYWSILVAGALFVYQQ), and 268-288 (AFMNNNYVGLVLFLGLAMSYW).

It belongs to the UbiA prenyltransferase family. The cofactor is Mg(2+).

It is found in the cell inner membrane. The enzyme catalyses all-trans-octaprenyl diphosphate + 4-hydroxybenzoate = 4-hydroxy-3-(all-trans-octaprenyl)benzoate + diphosphate. It participates in cofactor biosynthesis; ubiquinone biosynthesis. Its function is as follows. Catalyzes the prenylation of para-hydroxybenzoate (PHB) with an all-trans polyprenyl group. Mediates the second step in the final reaction sequence of ubiquinone-8 (UQ-8) biosynthesis, which is the condensation of the polyisoprenoid side chain with PHB, generating the first membrane-bound Q intermediate 3-octaprenyl-4-hydroxybenzoate. The polypeptide is 4-hydroxybenzoate octaprenyltransferase (Escherichia coli (strain UTI89 / UPEC)).